A 93-amino-acid polypeptide reads, in one-letter code: Small ribosomal subunit protein uS19 (93 aa).

Belongs to the universal ribosomal protein uS19 family.

Functionally, protein S19 forms a complex with S13 that binds strongly to the 16S ribosomal RNA. This chain is Small ribosomal subunit protein uS19, found in Geotalea daltonii (strain DSM 22248 / JCM 15807 / FRC-32) (Geobacter daltonii).